The following is a 382-amino-acid chain: MPQRQPQNAHPADGIYFGLMSGTSMDGVDGVAVRFEAGKAPVVLAEAFVGFAQSLRDALFALQQPGDDEIDRESLAANALVTRYAVCCHELQRTAGLSRDEIRAIGVHGQTVRHRPERGYTRQINNPALLAELTQVDVIADFRSRDVAAGGHGAPLAPAFHATVFGAPGETRVVCNLGGISNITILPGEGGDVRGFDCGPANALLDEWATRHLGKPYDDGGKFAARGTVHAPLLDALLDEPYFAAPPPKSTGRDLFNPAWLDAKLAAFAQVAPEDVQATLTALTAVSVAREIAQHAAGCKAVFVCGGGARNPVLLDALRHALREAGVPATVDTTATLGVPPQQVEALAFAWLAYRFTARQPGNLATVTGAAGNRVLGALYPR.

22 to 29 (GTSMDGVD) is an ATP binding site.

It belongs to the anhydro-N-acetylmuramic acid kinase family.

It catalyses the reaction 1,6-anhydro-N-acetyl-beta-muramate + ATP + H2O = N-acetyl-D-muramate 6-phosphate + ADP + H(+). It participates in amino-sugar metabolism; 1,6-anhydro-N-acetylmuramate degradation. Its pathway is cell wall biogenesis; peptidoglycan recycling. In terms of biological role, catalyzes the specific phosphorylation of 1,6-anhydro-N-acetylmuramic acid (anhMurNAc) with the simultaneous cleavage of the 1,6-anhydro ring, generating MurNAc-6-P. Is required for the utilization of anhMurNAc either imported from the medium or derived from its own cell wall murein, and thus plays a role in cell wall recycling. This is Anhydro-N-acetylmuramic acid kinase from Burkholderia lata (strain ATCC 17760 / DSM 23089 / LMG 22485 / NCIMB 9086 / R18194 / 383).